Consider the following 1131-residue polypeptide: MSDKRADGRLEGTSDTFGGLVIKKKKVEGDSKPTEPSGKSLLGLDRLASTKREHARKRLEDDDDRGVTESVRKGIEKVHEKHRDRDDRGMKYKSRDDDRRRDRDRSERREPSSRRGWKDRSGDQTPRFKVPDTPSRMSWDQDDREGSSRKRNSWDMPTPRGERDRKRYMDSERSISSAWRSERRNRDDEKRRRHRKPEDSVRSVKEEKAEPTFHDDEERAQWEEEQKNLDREWYDNEGAFDDEYNPFNKVSDEFVEKREKQWQEKTQKPRLTVKQQAIKRENELWENNRLHRSGVVAMADELSSIFEDETDENRVTILVQNIVPPFLDGRIVFTKQAQPIIPVVDTTCDMAVSAARGSVAVRKRREVEDRKKAQDKHWELAGSKLGNLMGVKEKKDETADPEDDDSGNYKESHQFASHMKDNEAVSDFAMEKSIKQQREYLPVFACRQKMMNVIRENNVVIIVGETGSGKTTQLAQYLLEDGFGDSGLIGCTQPRRVAAMSVARRVADEMGVDLGQDVGYAIRFEDCTSEKTIIKYMTDGILLRECLGDGSLDQYSAIIMDEAHERSLNTDVLFGLLREVIAKRADLKLIVTSATMDADKFADFFGGNCPTFTIPGRTFPVELFHARTPVEDYVDAAVKQAVTIHLGGMDGDILIFMPGQEDIECTCEMIKEKLGELDEAPPLAVLPIYSQLPSDLQAKIFQRAPGGMRKAIVATNIAETSLTVDGILFVIDPGFCKMKVYNPRIGMDALSIFPVSQASANQRTGRAGRTGPGQCYRLYTERQFKDELLKSTVPEIQRTNLANVVLLLKSLGVDDLLKFHFMDAPPQDNMLNSMYQLWTLGALDNTGQLTPMGRKMVEFPLDPTLSKMLIMSAEMGCSDEVLTIVSMLSVPAIFFRPKGREEEADAKKEKFQVPESDHLTFLNVYIQWRTHKYSAKWCADNYLHVKALKKVREVRAQLKEIMQDLKLPLISNGSEWDIVRKCICSAYFHNAARLKGIGEYVNVRTGIPCFLHPTSALFGMGFMPDYVVYHELIMTAKEYMQCVTAVDAIWLAELGPMFYSIKESKQSRKELKMESVRTVETMEAEMREAQKEMERRKEESDKAFKRPESSRRVVEVGSKSARSERRKLWGL.

6 stretches are compositionally biased toward basic and acidic residues: residues 1 to 12 (MSDKRADGRLEG), 65 to 122 (RGVT…DRSG), 139 to 148 (WDQDDREGSS), 160 to 173 (RGER…DSER), 180 to 225 (RSER…WEEE), and 407 to 416 (GNYKESHQFA). 2 disordered regions span residues 1-225 (MSDK…WEEE) and 389-416 (MGVK…HQFA). The Helicase ATP-binding domain occupies 451–614 (MNVIRENNVV…FGGNCPTFTI (164 aa)). 464 to 471 (GETGSGKT) contacts ATP. The short motif at 561–564 (DEAH) is the DEAH box element. Positions 629 to 812 (PVEDYVDAAV…NVVLLLKSLG (184 aa)) constitute a Helicase C-terminal domain. 2 stretches are compositionally biased toward basic and acidic residues: residues 1085-1114 (EMRE…RRVV) and 1121-1131 (ARSERRKLWGL). Positions 1085–1131 (EMREAQKEMERRKEESDKAFKRPESSRRVVEVGSKSARSERRKLWGL) are disordered.

This sequence belongs to the DEAD box helicase family. DEAH subfamily. PRP16 sub-subfamily.

The protein resides in the nucleus. It catalyses the reaction ATP + H2O = ADP + phosphate + H(+). Functionally, probable ATP-binding RNA helicase involved in pre-mRNA splicing. The chain is Probable pre-mRNA-splicing factor ATP-dependent RNA helicase mog-1 (mog-1) from Caenorhabditis elegans.